We begin with the raw amino-acid sequence, 126 residues long: Aspartate 1-decarboxylase (126 aa).

Serine 25 functions as the Schiff-base intermediate with substrate; via pyruvic acid in the catalytic mechanism. At serine 25 the chain carries Pyruvic acid (Ser). Threonine 57 contacts substrate. Catalysis depends on tyrosine 58, which acts as the Proton donor. 73 to 75 (GAA) provides a ligand contact to substrate.

Belongs to the PanD family. Heterooctamer of four alpha and four beta subunits. Pyruvate serves as cofactor. Post-translationally, is synthesized initially as an inactive proenzyme, which is activated by self-cleavage at a specific serine bond to produce a beta-subunit with a hydroxyl group at its C-terminus and an alpha-subunit with a pyruvoyl group at its N-terminus.

Its subcellular location is the cytoplasm. It carries out the reaction L-aspartate + H(+) = beta-alanine + CO2. It functions in the pathway cofactor biosynthesis; (R)-pantothenate biosynthesis; beta-alanine from L-aspartate: step 1/1. Functionally, catalyzes the pyruvoyl-dependent decarboxylation of aspartate to produce beta-alanine. The chain is Aspartate 1-decarboxylase from Psychrobacter sp. (strain PRwf-1).